Consider the following 460-residue polypeptide: Ribosomal protein uS12 methylthiotransferase RimO (460 aa).

Positions Met-18–Arg-134 constitute an MTTase N-terminal domain. The [4Fe-4S] cluster site is built by Cys-27, Cys-63, Cys-97, Cys-171, Cys-175, and Cys-178. Residues Ser-157–Ser-387 enclose the Radical SAM core domain. The TRAM domain occupies Gln-390 to Asp-456.

The protein belongs to the methylthiotransferase family. RimO subfamily. The cofactor is [4Fe-4S] cluster.

It is found in the cytoplasm. The catalysed reaction is L-aspartate(89)-[ribosomal protein uS12]-hydrogen + (sulfur carrier)-SH + AH2 + 2 S-adenosyl-L-methionine = 3-methylsulfanyl-L-aspartate(89)-[ribosomal protein uS12]-hydrogen + (sulfur carrier)-H + 5'-deoxyadenosine + L-methionine + A + S-adenosyl-L-homocysteine + 2 H(+). In terms of biological role, catalyzes the methylthiolation of an aspartic acid residue of ribosomal protein uS12. The protein is Ribosomal protein uS12 methylthiotransferase RimO of Heliobacterium modesticaldum (strain ATCC 51547 / Ice1).